Consider the following 721-residue polypeptide: Catalase-peroxidase (721 aa).

The segment at residues 89 to 212 (WHSAGTYRTG…LAAVQMGLIY (124 aa)) is a cross-link (tryptophyl-tyrosyl-methioninium (Trp-Tyr) (with M-238)). His90 serves as the catalytic Proton acceptor. A cross-link (tryptophyl-tyrosyl-methioninium (Tyr-Met) (with W-89)) is located at residues 212-238 (YVNPEGPNGDPDPFAAAVDIRETFARM). Residue His253 participates in heme b binding.

The protein belongs to the peroxidase family. Peroxidase/catalase subfamily. As to quaternary structure, homodimer or homotetramer. Heme b serves as cofactor. Formation of the three residue Trp-Tyr-Met cross-link is important for the catalase, but not the peroxidase activity of the enzyme.

The catalysed reaction is H2O2 + AH2 = A + 2 H2O. It catalyses the reaction 2 H2O2 = O2 + 2 H2O. Bifunctional enzyme with both catalase and broad-spectrum peroxidase activity. This chain is Catalase-peroxidase, found in Shewanella baltica (strain OS155 / ATCC BAA-1091).